The sequence spans 318 residues: Receptor homology region, transmembrane domain- and RING domain-containing protein 5 (318 aa).

The first 20 residues, 1–20 (MNYSWITIMSLLVICKLASA), serve as a signal peptide directing secretion. Over 22 to 163 (VVLIGKNTIL…IPGFGISSWS (142 aa)) the chain is Lumenal. A disulfide bridge connects residues Cys62 and Cys87. The 74-residue stretch at 70 to 143 (EKRSKYRSSY…RASGEVLKGY (74 aa)) folds into the PA domain. Asn121 carries N-linked (GlcNAc...) asparagine glycosylation. A helical transmembrane segment spans residues 164 to 184 (IMGITFISLLAMSAILATCFV). Topologically, residues 185–318 (VRRHQIRQSV…DLPIVVRVYL (134 aa)) are cytoplasmic. An RING-type; atypical zinc finger spans residues 233 to 275 (CAICIDDYCVGEKLRILPCKHKYHAVCIDSWLGRCRSFCPVCK).

The protein resides in the prevacuolar compartment membrane. Its subcellular location is the protein storage vacuole membrane. Functionally, involved in the trafficking of vacuolar proteins. May function as a sorting receptor for protein trafficking to the protein storage vacuole (PSV). In Arabidopsis thaliana (Mouse-ear cress), this protein is Receptor homology region, transmembrane domain- and RING domain-containing protein 5 (RMR5).